Here is a 156-residue protein sequence, read N- to C-terminus: Small ribosomal subunit protein uS7 (156 aa).

The protein belongs to the universal ribosomal protein uS7 family. In terms of assembly, part of the 30S ribosomal subunit. Contacts proteins S9 and S11.

In terms of biological role, one of the primary rRNA binding proteins, it binds directly to 16S rRNA where it nucleates assembly of the head domain of the 30S subunit. Is located at the subunit interface close to the decoding center, probably blocks exit of the E-site tRNA. The protein is Small ribosomal subunit protein uS7 of Shewanella sp. (strain MR-7).